The following is a 1021-amino-acid chain: Collagenase ColH (1021 aa).

Residues 1–30 (MKRKCLSKRLMLAITMATIFTVNSTLPIYA) form the signal peptide. A propeptide spanning residues 31–40 (AVDKNNATAA) is cleaved from the precursor. Residues 41-320 (VQNESKRYTV…SADQIKRHYD (280 aa)) are activator domain. The segment at 41–717 (VQNESKRYTV…TYDVVFHGYL (677 aa)) is S1 metalloprotease domain. A catalytic subdomain region spans residues 330–601 (PLDKFKKEGK…MQERIDNYEN (272 aa)). Asp421 serves as a coordination point for Zn(2+). Ca(2+) is bound at residue Glu430. Position 455 (His455) interacts with Zn(2+). The active site involves Glu456. Residue His459 participates in Zn(2+) binding. Residues Gly463, Val467, and Gly469 each contribute to the Ca(2+) site. Glu487 is a Zn(2+) binding site. Positions 609–721 (DDYLVRHAYK…VFHGYLPNEG (113 aa)) are helper subdomain. An S2a domain region spans residues 718 to 810 (PNEGDSKNSL…VSTTTAEIKD (93 aa)). Positions 725, 726, 753, 755, 794, 814, 815, 842, 844, 884, 908, 910, 912, 913, 931, 937, 938, and 939 each coordinate Ca(2+). A PKD 1 domain is found at 727–808 (LPYGKINGTY…SSVSTTTAEI (82 aa)). Residues 811–904 (LSENKLPVIY…KIKITDPVYP (94 aa)) form an S2b domain region. In terms of domain architecture, PKD 2 spans 816–905 (LPVIYMHVPK…IKITDPVYPI (90 aa)). The disordered stretch occupies residues 903–922 (YPIGTEKEPNNSKETASGPI). The segment at 905-1021 (IGTEKEPNNS…RINIEGSVGR (117 aa)) is S3 collagen-binding domain. A collagen-binding region spans residues 1002-1004 (YMF).

The protein belongs to the peptidase M9B family. Collagenase subfamily. Ca(2+) is required as a cofactor. Requires Zn(2+) as cofactor. Post-translationally, upon purification gives rise to 98 kDa, 105 kDa and 116 kDa (full-length) proteins, all of which have the same N-terminus.

It is found in the secreted. The catalysed reaction is Digestion of native collagen in the triple helical region at Xaa-|-Gly bonds. With synthetic peptides, a preference is shown for Gly at P3 and P1', Pro and Ala at P2 and P2', and hydroxyproline, Ala or Arg at P3'.. Inhibited by EDTA. Inhibited by 1-10-phenanthroline. Inhibited by broad-spectrum zinc metalloprotease inhibitor batimastat. N-aryl mercaptoacetamide-based inhibitors have been isolated that act on clostridial collagenases with submicromolar affinity while having negligibile activity on human collagenases. Functionally, clostridial collagenases are among the most efficient degraders of eukaryotic collagen known; saprophytes use collagen as a carbon source while pathogens additionally digest collagen to aid in host colonization. Has both tripeptidylcarboxypeptidase on Gly-X-Y and endopeptidase activities; the endopeptidase cuts within the triple helix region of collagen while tripeptidylcarboxypeptidase successively digests the exposed ends, thus clostridial collagenases can digest large sections of collagen. The full-length protein has collagenase activity, while both the 116 kDa and 98 kDa forms act on gelatin. In vitro digestion of soluble calf skin collagen fibrils requires both ColG and ColH; ColG forms missing the second collagen-binding domain is also synergistic with ColH, although their overall efficiency is decreased. Digestion of collagen requires Ca(2+) and is inhibited by EDTA. The activator domain (residues 119-388) and catalytic subdomain (330-601) open and close around substrate allowing digestion when the protein is closed. This chain is Collagenase ColH, found in Hathewaya histolytica (Clostridium histolyticum).